The chain runs to 255 residues: Small ribosomal subunit protein eS1 (255 aa).

Ala-2 is modified (N-acetylalanine; partial).

It belongs to the eukaryotic ribosomal protein eS1 family. In terms of assembly, component of the small ribosomal subunit. Mature ribosomes consist of a small (40S) and a large (60S) subunit. The 40S subunit contains about 33 different proteins and 1 molecule of RNA (18S). The 60S subunit contains about 49 different proteins and 3 molecules of RNA (25S, 5.8S and 5S).

It localises to the cytoplasm. This chain is Small ribosomal subunit protein eS1, found in Vanderwaltozyma polyspora (strain ATCC 22028 / DSM 70294 / BCRC 21397 / CBS 2163 / NBRC 10782 / NRRL Y-8283 / UCD 57-17) (Kluyveromyces polysporus).